Consider the following 64-residue polypeptide: Large ribosomal subunit protein uL29 (64 aa).

The protein belongs to the universal ribosomal protein uL29 family.

This is Large ribosomal subunit protein uL29 from Nitratiruptor sp. (strain SB155-2).